The chain runs to 81 residues: MAHSVKIYDTCIGCTQCVRACPTDVLEMISWDGCKANQIASAPRTEDCVGCKRCESACPTDFLSVRVYLGSETTRSMGLAY.

4Fe-4S ferredoxin-type domains are found at residues 2-31 (AHSVKIYDTCIGCTQCVRACPTDVLEMISW) and 39-68 (IASAPRTEDCVGCKRCESACPTDFLSVRVY). Residues C11, C14, C17, C21, C48, C51, C54, and C58 each contribute to the [4Fe-4S] cluster site.

The eukaryotic PSI reaction center is composed of at least 11 subunits. Requires [4Fe-4S] cluster as cofactor.

The protein localises to the plastid. It localises to the chloroplast thylakoid membrane. The catalysed reaction is reduced [plastocyanin] + hnu + oxidized [2Fe-2S]-[ferredoxin] = oxidized [plastocyanin] + reduced [2Fe-2S]-[ferredoxin]. In terms of biological role, apoprotein for the two 4Fe-4S centers FA and FB of photosystem I (PSI); essential for photochemical activity. FB is the terminal electron acceptor of PSI, donating electrons to ferredoxin. The C-terminus interacts with PsaA/B/D and helps assemble the protein into the PSI complex. Required for binding of PsaD and PsaE to PSI. PSI is a plastocyanin-ferredoxin oxidoreductase, converting photonic excitation into a charge separation, which transfers an electron from the donor P700 chlorophyll pair to the spectroscopically characterized acceptors A0, A1, FX, FA and FB in turn. The sequence is that of Photosystem I iron-sulfur center (psaC) from Anthoceros angustus (Hornwort).